A 123-amino-acid polypeptide reads, in one-letter code: Small ribosomal subunit protein uS12 (123 aa).

The residue at position 89 (Asp-89) is a 3-methylthioaspartic acid.

Belongs to the universal ribosomal protein uS12 family. As to quaternary structure, part of the 30S ribosomal subunit. Contacts proteins S8 and S17. May interact with IF1 in the 30S initiation complex.

Its function is as follows. With S4 and S5 plays an important role in translational accuracy. Interacts with and stabilizes bases of the 16S rRNA that are involved in tRNA selection in the A site and with the mRNA backbone. Located at the interface of the 30S and 50S subunits, it traverses the body of the 30S subunit contacting proteins on the other side and probably holding the rRNA structure together. The combined cluster of proteins S8, S12 and S17 appears to hold together the shoulder and platform of the 30S subunit. In Rhizobium etli (strain ATCC 51251 / DSM 11541 / JCM 21823 / NBRC 15573 / CFN 42), this protein is Small ribosomal subunit protein uS12.